The sequence spans 448 residues: Probable malate:quinone oxidoreductase (448 aa).

Belongs to the MQO family. FAD serves as cofactor.

The catalysed reaction is (S)-malate + a quinone = a quinol + oxaloacetate. The protein operates within carbohydrate metabolism; tricarboxylic acid cycle; oxaloacetate from (S)-malate (quinone route): step 1/1. Its function is as follows. Catalyzes oxidation of malate to oxaloacetate in the citric acid cycle. Donates electrons to quinones of the electron transfer chain. The polypeptide is Probable malate:quinone oxidoreductase (mqo) (Campylobacter jejuni subsp. jejuni serotype O:2 (strain ATCC 700819 / NCTC 11168)).